The chain runs to 223 residues: 3,4-dihydroxy-2-butanone 4-phosphate synthase (223 aa).

D-ribulose 5-phosphate contacts are provided by residues 47-48 (RE), D52, 160-164 (RRGHT), and E184. E48 is a Mg(2+) binding site. H163 contributes to the Mg(2+) binding site.

The protein belongs to the DHBP synthase family. As to quaternary structure, homodimer. Mg(2+) serves as cofactor. Requires Mn(2+) as cofactor.

It catalyses the reaction D-ribulose 5-phosphate = (2S)-2-hydroxy-3-oxobutyl phosphate + formate + H(+). Its pathway is cofactor biosynthesis; riboflavin biosynthesis; 2-hydroxy-3-oxobutyl phosphate from D-ribulose 5-phosphate: step 1/1. Functionally, catalyzes the conversion of D-ribulose 5-phosphate to formate and 3,4-dihydroxy-2-butanone 4-phosphate. This chain is 3,4-dihydroxy-2-butanone 4-phosphate synthase, found in Cupriavidus pinatubonensis (strain JMP 134 / LMG 1197) (Cupriavidus necator (strain JMP 134)).